Reading from the N-terminus, the 432-residue chain is Adenylosuccinate synthetase (432 aa).

GTP-binding positions include 13–19 and 41–43; these read GDEGKGK and GHT. Catalysis depends on aspartate 14, which acts as the Proton acceptor. Residues aspartate 14 and glycine 41 each contribute to the Mg(2+) site. IMP contacts are provided by residues 14 to 17, 39 to 42, threonine 130, arginine 144, glutamine 225, threonine 240, and arginine 306; these read DEGK and NAGH. The active-site Proton donor is the histidine 42. Position 302-308 (302-308) interacts with substrate; it reads TVTGRAR. GTP contacts are provided by residues arginine 308, 334–336, and 416–418; these read KLD and STG.

This sequence belongs to the adenylosuccinate synthetase family. As to quaternary structure, homodimer. Mg(2+) is required as a cofactor.

Its subcellular location is the cytoplasm. The catalysed reaction is IMP + L-aspartate + GTP = N(6)-(1,2-dicarboxyethyl)-AMP + GDP + phosphate + 2 H(+). Its pathway is purine metabolism; AMP biosynthesis via de novo pathway; AMP from IMP: step 1/2. Plays an important role in the de novo pathway of purine nucleotide biosynthesis. Catalyzes the first committed step in the biosynthesis of AMP from IMP. This Herminiimonas arsenicoxydans protein is Adenylosuccinate synthetase.